Reading from the N-terminus, the 278-residue chain is Shikimate dehydrogenase (NADP(+)) (278 aa).

Residues 19-21 and T66 contribute to the shikimate site; that span reads SLS. K70 functions as the Proton acceptor in the catalytic mechanism. Shikimate contacts are provided by N91 and D106. NADP(+) contacts are provided by residues 130–134, 152–157, and L222; these read GAGGS and NRTVEK. Residue Y224 participates in shikimate binding. An NADP(+)-binding site is contributed by G245.

It belongs to the shikimate dehydrogenase family. In terms of assembly, homodimer.

The catalysed reaction is shikimate + NADP(+) = 3-dehydroshikimate + NADPH + H(+). Its pathway is metabolic intermediate biosynthesis; chorismate biosynthesis; chorismate from D-erythrose 4-phosphate and phosphoenolpyruvate: step 4/7. Involved in the biosynthesis of the chorismate, which leads to the biosynthesis of aromatic amino acids. Catalyzes the reversible NADPH linked reduction of 3-dehydroshikimate (DHSA) to yield shikimate (SA). The protein is Shikimate dehydrogenase (NADP(+)) of Methanococcus aeolicus (strain ATCC BAA-1280 / DSM 17508 / OCM 812 / Nankai-3).